The sequence spans 257 residues: Zinc transporter ZupT (257 aa).

Helical transmembrane passes span 5–25 (LILTLLAGAATFIGAFLGVLG), 33–53 (LAFSLGFAAGIMLLISLMEML), 61–81 (GMSPVLGYGMFIIGLLGYFGL), 109–129 (AILLTLGISLHNFPEGIATFV), 137–157 (LGFGIALAVALHNIPEGLAVA), 171–191 (IFWAGISGMAEILGGVLAWLI), 195–215 (LVSPIVMAAIMAAVAGIMVAL), and 236–256 (GVLCGMSIMGLSLVILQTIGI). Residues asparagine 120 and glutamate 123 each contribute to the Fe(2+) site. 2 residues coordinate Zn(2+): glutamate 123 and histidine 148. Positions 149, 152, and 181 each coordinate Fe(2+). Residue glutamate 152 coordinates Zn(2+).

Belongs to the ZIP transporter (TC 2.A.5) family. ZupT subfamily.

It localises to the cell inner membrane. It carries out the reaction Zn(2+)(in) = Zn(2+)(out). Functionally, mediates zinc uptake. May also transport other divalent cations. The chain is Zinc transporter ZupT from Salmonella paratyphi A (strain ATCC 9150 / SARB42).